Consider the following 1087-residue polypeptide: Exportin-7-B (1087 aa).

The Importin N-terminal domain maps to 30–96 (AEKALVEFTN…RNYVLTYLAT (67 aa)).

It belongs to the exportin family.

The protein localises to the cytoplasm. It is found in the nucleus. Its function is as follows. Mediates the nuclear export of proteins (cargos) with broad substrate specificity. This Xenopus laevis (African clawed frog) protein is Exportin-7-B (xpo7-b).